The primary structure comprises 216 residues: Peptide methionine sulfoxide reductase MsrA (216 aa).

Residue Cys54 is part of the active site.

This sequence belongs to the MsrA Met sulfoxide reductase family.

It catalyses the reaction L-methionyl-[protein] + [thioredoxin]-disulfide + H2O = L-methionyl-(S)-S-oxide-[protein] + [thioredoxin]-dithiol. It carries out the reaction [thioredoxin]-disulfide + L-methionine + H2O = L-methionine (S)-S-oxide + [thioredoxin]-dithiol. Has an important function as a repair enzyme for proteins that have been inactivated by oxidation. Catalyzes the reversible oxidation-reduction of methionine sulfoxide in proteins to methionine. The protein is Peptide methionine sulfoxide reductase MsrA of Xanthomonas campestris pv. campestris (strain ATCC 33913 / DSM 3586 / NCPPB 528 / LMG 568 / P 25).